We begin with the raw amino-acid sequence, 210 residues long: Proline-rich protein 20G (210 aa).

Over residues Met1–Arg11 the composition is skewed to basic residues. Positions Met1 to Arg82 are disordered. Over residues Gly69–Arg82 the composition is skewed to gly residues.

It belongs to the PRR20 family.

The chain is Proline-rich protein 20G from Homo sapiens (Human).